We begin with the raw amino-acid sequence, 432 residues long: Glutamyl-tRNA reductase (432 aa).

Residues 55-58 (TCNR), Ser-114, 119-121 (ETQ), and Gln-125 contribute to the substrate site. The active-site Nucleophile is the Cys-56. Residue 194-199 (GAGEMI) participates in NADP(+) binding.

This sequence belongs to the glutamyl-tRNA reductase family. In terms of assembly, homodimer.

The catalysed reaction is (S)-4-amino-5-oxopentanoate + tRNA(Glu) + NADP(+) = L-glutamyl-tRNA(Glu) + NADPH + H(+). It functions in the pathway porphyrin-containing compound metabolism; protoporphyrin-IX biosynthesis; 5-aminolevulinate from L-glutamyl-tRNA(Glu): step 1/2. Its function is as follows. Catalyzes the NADPH-dependent reduction of glutamyl-tRNA(Glu) to glutamate 1-semialdehyde (GSA). The sequence is that of Glutamyl-tRNA reductase from Burkholderia lata (strain ATCC 17760 / DSM 23089 / LMG 22485 / NCIMB 9086 / R18194 / 383).